A 97-amino-acid chain; its full sequence is UPF0235 protein Daro_3887 (97 aa).

The protein belongs to the UPF0235 family.

This is UPF0235 protein Daro_3887 from Dechloromonas aromatica (strain RCB).